We begin with the raw amino-acid sequence, 308 residues long: uncharacterized protein (308 aa).

This is an uncharacterized protein from Treponema pallidum (strain Nichols).